Reading from the N-terminus, the 142-residue chain is E1B protein, small T-antigen (142 aa).

Belongs to the adenoviridae E1B 19 kDa protein family.

It is found in the host cell membrane. The protein resides in the host nucleus envelope. It localises to the host nucleus lamina. Its function is as follows. Putative adenovirus Bcl-2 homolog that inhibits apoptosis induced by TNF or FAS pathways, as well as p53-mediated apoptosis. Without E1B 19K function, virus production is compromised because of premature death of host cell. Interacts with Bax protein in cell lysates. This chain is E1B protein, small T-antigen, found in Homo sapiens (Human).